The sequence spans 380 residues: Queuine tRNA-ribosyltransferase (380 aa).

Asp96 functions as the Proton acceptor in the catalytic mechanism. Residues 96 to 100 (DSGGF), Asp150, Gln193, and Gly220 contribute to the substrate site. An RNA binding region spans residues 251-257 (GVGAPDS). The Nucleophile role is filled by Asp270. An RNA binding; important for wobble base 34 recognition region spans residues 275-279 (TRIAR). Zn(2+) is bound by residues Cys308, Cys310, Cys313, and His339.

Belongs to the queuine tRNA-ribosyltransferase family. Homodimer. Within each dimer, one monomer is responsible for RNA recognition and catalysis, while the other monomer binds to the replacement base PreQ1. Zn(2+) is required as a cofactor.

The catalysed reaction is 7-aminomethyl-7-carbaguanine + guanosine(34) in tRNA = 7-aminomethyl-7-carbaguanosine(34) in tRNA + guanine. Its pathway is tRNA modification; tRNA-queuosine biosynthesis. Its function is as follows. Catalyzes the base-exchange of a guanine (G) residue with the queuine precursor 7-aminomethyl-7-deazaguanine (PreQ1) at position 34 (anticodon wobble position) in tRNAs with GU(N) anticodons (tRNA-Asp, -Asn, -His and -Tyr). Catalysis occurs through a double-displacement mechanism. The nucleophile active site attacks the C1' of nucleotide 34 to detach the guanine base from the RNA, forming a covalent enzyme-RNA intermediate. The proton acceptor active site deprotonates the incoming PreQ1, allowing a nucleophilic attack on the C1' of the ribose to form the product. After dissociation, two additional enzymatic reactions on the tRNA convert PreQ1 to queuine (Q), resulting in the hypermodified nucleoside queuosine (7-(((4,5-cis-dihydroxy-2-cyclopenten-1-yl)amino)methyl)-7-deazaguanosine). The polypeptide is Queuine tRNA-ribosyltransferase (Streptococcus pneumoniae (strain Hungary19A-6)).